The sequence spans 176 residues: NAD(P)H-quinone oxidoreductase subunit 6, chloroplastic (176 aa).

The next 5 helical transmembrane spans lie at Phe10 to Pro30, Pro32 to Leu52, Ala61 to Met81, Leu92 to Ile112, and Phe152 to Ala172.

Belongs to the complex I subunit 6 family. In terms of assembly, NDH is composed of at least 16 different subunits, 5 of which are encoded in the nucleus.

Its subcellular location is the plastid. It is found in the chloroplast thylakoid membrane. The catalysed reaction is a plastoquinone + NADH + (n+1) H(+)(in) = a plastoquinol + NAD(+) + n H(+)(out). It catalyses the reaction a plastoquinone + NADPH + (n+1) H(+)(in) = a plastoquinol + NADP(+) + n H(+)(out). Its function is as follows. NDH shuttles electrons from NAD(P)H:plastoquinone, via FMN and iron-sulfur (Fe-S) centers, to quinones in the photosynthetic chain and possibly in a chloroplast respiratory chain. The immediate electron acceptor for the enzyme in this species is believed to be plastoquinone. Couples the redox reaction to proton translocation, and thus conserves the redox energy in a proton gradient. This Solanum lycopersicum (Tomato) protein is NAD(P)H-quinone oxidoreductase subunit 6, chloroplastic (ndhG).